The primary structure comprises 79 residues: Sec-independent protein translocase protein TatA (79 aa).

A helical transmembrane segment spans residues 1–21 (MGGFTSIWHWVIVLLVIVLLF). The tract at residues 48–79 (EEEAKNEPKTLDAQVTQAKVHESSEIKNKQEG) is disordered. The segment covering 66–79 (KVHESSEIKNKQEG) has biased composition (basic and acidic residues).

The protein belongs to the TatA/E family. As to quaternary structure, the Tat system comprises two distinct complexes: a TatABC complex, containing multiple copies of TatA, TatB and TatC subunits, and a separate TatA complex, containing only TatA subunits. Substrates initially bind to the TatABC complex, which probably triggers association of the separate TatA complex to form the active translocon.

Its subcellular location is the cell inner membrane. Its function is as follows. Part of the twin-arginine translocation (Tat) system that transports large folded proteins containing a characteristic twin-arginine motif in their signal peptide across membranes. TatA could form the protein-conducting channel of the Tat system. This is Sec-independent protein translocase protein TatA from Helicobacter acinonychis (strain Sheeba).